The sequence spans 265 residues: MEDKKEEGESEIQEHGPEHWFSKWERQCLAEAEQEDQPEEEAEQSQQKLWHLFQNSATAVAQLYKDRVCQQQGLSLWVPFQNAATAVTNLYKESVDAHQRSFDLGIQIGYQRRNKDVLAWVKKRRRTIRREDLISFLCGKVPPPRNSRAPPRLTVVSPNRATPTETGSSVETDLQPFREAIALHGLSGAMASISVRSSTPGSPTHVSGSSNTGRRRNGLHDVDLNTFISEEMALHLDNGGTRKRSSAQCGDVITDSPTHKRNRMI.

Disordered regions lie at residues 1–22 (MEDK…HWFS), 145–170 (RNSR…GSSV), 195–218 (VRSS…RRNG), and 240–265 (GTRK…NRMI). Polar residues-rich tracts occupy residues 156–170 (VSPN…GSSV) and 195–212 (VRSS…SSNT).

It belongs to the TAPR1 family. Oligomer.

The protein localises to the nucleus. It localises to the cytoplasm. Its function is as follows. Acts as a central player within a network of stress response pathways promoting cellular adaptability. Functions as a negative regulator of TP53/P53 in the cellular response to telomere erosion and probably also DNA damage. The protein is HUWE1-associated protein modifying stress responses of Xenopus laevis (African clawed frog).